The chain runs to 105 residues: Venom metalloprotease inhibitor (105 aa).

The signal sequence occupies residues Met1–Ala21. 5 disulfide bridges follow: Cys26-Cys61, Cys35-Cys57, Cys39-Cys50, Cys43-Cys83, and Cys63-Cys77. The region spanning Cys26–Cys83 is the TIL domain.

The protein belongs to the serine protease inhibitor-like (TIL domain-containing) family. As to expression, expressed by the venom gland.

Its subcellular location is the secreted. Functionally, inhibits metalloprotease (human MMP3), trypsin, chymotrypsin, plasmin and microbial serine protease (proteinase K). Exhibits antifibrinolytic activity by binding plasmin and inhibiting it. Does not inhibit elastase, thrombin or microbial serine protease (subtilisin A). The sequence is that of Venom metalloprotease inhibitor from Bombus ignitus (Bumblebee).